The primary structure comprises 62 residues: Large ribosomal subunit protein eL37 (62 aa).

Residues cysteine 20, cysteine 23, cysteine 35, and cysteine 38 each contribute to the Zn(2+) site. Residues 20-38 (CRRCGRHSFNVAKGYCAAC) form a C4-type zinc finger.

Belongs to the eukaryotic ribosomal protein eL37 family. It depends on Zn(2+) as a cofactor.

Binds to the 23S rRNA. This is Large ribosomal subunit protein eL37 from Desulfurococcus amylolyticus (strain DSM 18924 / JCM 16383 / VKM B-2413 / 1221n) (Desulfurococcus kamchatkensis).